Consider the following 264-residue polypeptide: Isoprenyl transferase (264 aa).

Asp-43 is a catalytic residue. Asp-43 is a Mg(2+) binding site. Substrate is bound by residues 44–47 (GNGR), Trp-48, Arg-56, His-60, and 88–90 (STE). The Proton acceptor role is filled by Asn-91. Substrate contacts are provided by residues Trp-92, Arg-94, Arg-211, and 217–219 (RTS). Mg(2+) is bound at residue Glu-230.

It belongs to the UPP synthase family. As to quaternary structure, homodimer. It depends on Mg(2+) as a cofactor.

Functionally, catalyzes the condensation of isopentenyl diphosphate (IPP) with allylic pyrophosphates generating different type of terpenoids. This is Isoprenyl transferase from Bifidobacterium longum (strain NCC 2705).